Consider the following 163-residue polypeptide: uncharacterized protein (163 aa).

In terms of tissue distribution, expressed in keratinocytes.

This is an uncharacterized protein from Homo sapiens (Human).